The primary structure comprises 462 residues: uncharacterized protein (462 aa).

It belongs to the IIV-6 329R family.

This is an uncharacterized protein from Aedes vexans (Inland floodwater mosquito).